The primary structure comprises 353 residues: Mitogen-activated protein kinase mpkB (353 aa).

One can recognise a Protein kinase domain in the interval 21 to 309 (YEIQDVIGEG…VEEALRHPYL (289 aa)). ATP is bound by residues 27–35 (IGEGAYGVV) and Lys50. Catalysis depends on Asp145, which acts as the Proton acceptor.

The protein belongs to the protein kinase superfamily. Ser/Thr protein kinase family. MAP kinase subfamily. Requires Mg(2+) as cofactor.

It localises to the nucleus. The catalysed reaction is L-seryl-[protein] + ATP = O-phospho-L-seryl-[protein] + ADP + H(+). It catalyses the reaction L-threonyl-[protein] + ATP = O-phospho-L-threonyl-[protein] + ADP + H(+). With respect to regulation, activated by threonine and tyrosine phosphorylation. Functionally, mitogen-activated protein kinase (MAPK) that plays a role in conidiation and regulation of secondary metabolite biosynthesis. Acts as a repressor of dihydroxynaphthalene (DHN)-melanin production. The sequence is that of Mitogen-activated protein kinase mpkB from Aspergillus fumigatus (strain CBS 144.89 / FGSC A1163 / CEA10) (Neosartorya fumigata).